The primary structure comprises 238 residues: Hydroxyacylglutathione hydrolase (238 aa).

Zn(2+)-binding residues include histidine 52, histidine 54, aspartate 56, histidine 57, histidine 108, aspartate 125, and histidine 163.

This sequence belongs to the metallo-beta-lactamase superfamily. Glyoxalase II family. Monomer. The cofactor is Zn(2+).

The enzyme catalyses an S-(2-hydroxyacyl)glutathione + H2O = a 2-hydroxy carboxylate + glutathione + H(+). Its pathway is secondary metabolite metabolism; methylglyoxal degradation; (R)-lactate from methylglyoxal: step 2/2. Thiolesterase that catalyzes the hydrolysis of S-D-lactoyl-glutathione to form glutathione and D-lactic acid. The sequence is that of Hydroxyacylglutathione hydrolase from Haemophilus influenzae (strain ATCC 51907 / DSM 11121 / KW20 / Rd).